Here is a 252-residue protein sequence, read N- to C-terminus: 4-hydroxy-tetrahydrodipicolinate reductase (252 aa).

G8 to M13 contributes to the NAD(+) binding site. Position 36 (R36) interacts with NADP(+). Residues G89–T91 and S114–F117 contribute to the NAD(+) site. H146 functions as the Proton donor/acceptor in the catalytic mechanism. H147 serves as a coordination point for (S)-2,3,4,5-tetrahydrodipicolinate. K150 functions as the Proton donor in the catalytic mechanism. G156–T157 contacts (S)-2,3,4,5-tetrahydrodipicolinate.

Belongs to the DapB family.

It is found in the cytoplasm. The enzyme catalyses (S)-2,3,4,5-tetrahydrodipicolinate + NAD(+) + H2O = (2S,4S)-4-hydroxy-2,3,4,5-tetrahydrodipicolinate + NADH + H(+). The catalysed reaction is (S)-2,3,4,5-tetrahydrodipicolinate + NADP(+) + H2O = (2S,4S)-4-hydroxy-2,3,4,5-tetrahydrodipicolinate + NADPH + H(+). Its pathway is amino-acid biosynthesis; L-lysine biosynthesis via DAP pathway; (S)-tetrahydrodipicolinate from L-aspartate: step 4/4. Functionally, catalyzes the conversion of 4-hydroxy-tetrahydrodipicolinate (HTPA) to tetrahydrodipicolinate. In Methanoculleus marisnigri (strain ATCC 35101 / DSM 1498 / JR1), this protein is 4-hydroxy-tetrahydrodipicolinate reductase.